Reading from the N-terminus, the 503-residue chain is Potassium voltage-gated channel subfamily V member 1 (503 aa).

Disordered regions lie at residues 1–20 (MDLSPRNRPLLDSSSLDSGS) and 171–192 (KKDTDDQESQHESEQDFSQGPC). The Cytoplasmic portion of the chain corresponds to 3–213 (LSPRNRPLLD…EKPGSSTAAR (211 aa)). Residues 10 to 20 (LLDSSSLDSGS) are compositionally biased toward low complexity. Over residues 171–184 (KKDTDDQESQHESE) the composition is skewed to basic and acidic residues. Residues 214-234 (IFGVISIIFVAVSIVNMALMS) traverse the membrane as a helical segment. The Extracellular segment spans residues 235-241 (AELSWLN). A helical membrane pass occupies residues 242 to 262 (LQLLEILEYVCISWFTGEFIL). At 263-279 (RFLCVKDRCHFLRKVPN) the chain is on the cytoplasmic side. Residues 280–300 (IIDLLAILPFYITLLVESLSG) traverse the membrane as a helical segment. Residues 301-312 (SHTTQELENVGR) are Extracellular-facing. Residues 313–334 (LVQVLRLLRALRMLKLGRHSTG) form a helical; Voltage-sensor membrane-spanning segment. The Cytoplasmic portion of the chain corresponds to 335-348 (LRSLGMTITQCYEE). The chain crosses the membrane as a helical span at residues 349–369 (VGLLLLFLSVGISIFSTIEYF). Positions 395-400 (TVGYGD) match the Selectivity filter motif. Residues 410–430 (IVAFMCILSGILVLALPIAII) form a helical membrane-spanning segment. At 431–503 (NDRFSACYFT…RSSGGDDFWF (73 aa)) the chain is on the cytoplasmic side.

Belongs to the potassium channel family. V (TC 1.A.1.2) subfamily. Kv8.1/KCNV1 sub-subfamily. In terms of assembly, heteromultimer with KCNB1 and KCNB2. Interacts with KCNC4 and KCND1. In terms of tissue distribution, detected in brain, in neocortex, olfactory tubercle, hippocampus, dentate gyrus, piriform cortex and amygdala. Detected in Purkinje cells and granular cells of the cerebellum, in hippocampal CA4 neurons and neocortex pyramidal cells.

It localises to the cell membrane. In terms of biological role, potassium channel subunit that does not form functional channels by itself. Modulates KCNB1 and KCNB2 channel activity by shifting the threshold for inactivation to more negative values and by slowing the rate of inactivation. Can down-regulate the channel activity of KCNB1, KCNB2, KCNC4 and KCND1, possibly by trapping them in intracellular membranes. The chain is Potassium voltage-gated channel subfamily V member 1 (Kcnv1) from Rattus norvegicus (Rat).